A 288-amino-acid polypeptide reads, in one-letter code: MSAVIIDGKAVAARVRADVARDVAEFRAATGRQPGLATVLVGDDPASAVYIGGKRRSCVEAGMADLHQHLPADTPQDEIAALLDSLAADPAVSGILLQLPVPEGLDGAALVGRIPPEKDVDGLTTASVGLLARGLPGLRPCTPSGIIELLDAYDVELSGAPTVVVGRSELVGRPVAQLLVGRNATVTICHSRTRDLAAVCRGADVLVVAAGKQAIIGADAVKPGATVIDVGMHRTEQGLRGDVDFDAVREVAGRLTPVPGGVGPMTIAMLLRNTLLAARAAAEVGSLV.

NADP(+) is bound by residues 166-168 and S191; that span reads GRS.

It belongs to the tetrahydrofolate dehydrogenase/cyclohydrolase family. As to quaternary structure, homodimer.

The enzyme catalyses (6R)-5,10-methylene-5,6,7,8-tetrahydrofolate + NADP(+) = (6R)-5,10-methenyltetrahydrofolate + NADPH. The catalysed reaction is (6R)-5,10-methenyltetrahydrofolate + H2O = (6R)-10-formyltetrahydrofolate + H(+). It functions in the pathway one-carbon metabolism; tetrahydrofolate interconversion. Catalyzes the oxidation of 5,10-methylenetetrahydrofolate to 5,10-methenyltetrahydrofolate and then the hydrolysis of 5,10-methenyltetrahydrofolate to 10-formyltetrahydrofolate. This is Bifunctional protein FolD 2 from Frankia alni (strain DSM 45986 / CECT 9034 / ACN14a).